The sequence spans 58 residues: Large ribosomal subunit protein uL24 (58 aa).

This sequence belongs to the universal ribosomal protein uL24 family. As to quaternary structure, part of the 50S ribosomal subunit.

One of two assembly initiator proteins, it binds directly to the 5'-end of the 23S rRNA, where it nucleates assembly of the 50S subunit. In terms of biological role, one of the proteins that surrounds the polypeptide exit tunnel on the outside of the subunit. The sequence is that of Large ribosomal subunit protein uL24 (rplX) from Spiroplasma citri.